We begin with the raw amino-acid sequence, 271 residues long: ATP synthase subunit delta (271 aa).

The protein belongs to the ATPase delta chain family. F-type ATPases have 2 components, F(1) - the catalytic core - and F(0) - the membrane proton channel. F(1) has five subunits: alpha(3), beta(3), gamma(1), delta(1), epsilon(1). F(0) has three main subunits: a(1), b(2) and c(10-14). The alpha and beta chains form an alternating ring which encloses part of the gamma chain. F(1) is attached to F(0) by a central stalk formed by the gamma and epsilon chains, while a peripheral stalk is formed by the delta and b chains.

It localises to the cell membrane. Functionally, f(1)F(0) ATP synthase produces ATP from ADP in the presence of a proton or sodium gradient. F-type ATPases consist of two structural domains, F(1) containing the extramembraneous catalytic core and F(0) containing the membrane proton channel, linked together by a central stalk and a peripheral stalk. During catalysis, ATP synthesis in the catalytic domain of F(1) is coupled via a rotary mechanism of the central stalk subunits to proton translocation. This protein is part of the stalk that links CF(0) to CF(1). It either transmits conformational changes from CF(0) to CF(1) or is implicated in proton conduction. The polypeptide is ATP synthase subunit delta (Corynebacterium kroppenstedtii (strain DSM 44385 / JCM 11950 / CIP 105744 / CCUG 35717)).